The following is an 85-amino-acid chain: Protein Vpu (85 aa).

Residues 1–7 (MHQENLL) are Extracellular-facing. The chain crosses the membrane as a helical span at residues 8–28 (ALIALSALCLINVLIWLFNLR). Residues 29 to 85 (IYLVQRKQDRREQEILERLRRIKEIRDDSDYESNEEEQQEVMELIHSHGFANPMFEL) lie on the Cytoplasmic side of the membrane.

This sequence belongs to the HIV-1 VPU protein family. Homopentamer. Interacts with host CD4 and BRTC; these interactions induce proteasomal degradation of CD4. Interacts with host BST2; this interaction leads to the degradation of host BST2. Interacts with host FBXW11. Interacts with host AP1M1; this interaction plays a role in the mistrafficking and subsequent degradation of host BST2. Interacts with host RANBP2; this interaction allows Vpu to down-regulate host BLM sumoylation. Post-translationally, phosphorylated by host CK2. This phosphorylation is necessary for interaction with human BTRC and degradation of CD4.

Its subcellular location is the host membrane. With respect to regulation, ion channel activity is inhibited by hexamethylene amiloride in vitro. Functionally, enhances virion budding by targeting host CD4 and Tetherin/BST2 to proteasome degradation. Degradation of CD4 prevents any unwanted premature interactions between viral Env and its host receptor CD4 in the endoplasmic reticulum. Degradation of antiretroviral protein Tetherin/BST2 is important for virion budding, as BST2 tethers new viral particles to the host cell membrane. Mechanistically, Vpu bridges either CD4 or BST2 to BTRC, a substrate recognition subunit of the Skp1/Cullin/F-box protein E3 ubiquitin ligase, induces their ubiquitination and subsequent proteasomal degradation. The alteration of the E3 ligase specificity by Vpu seems to promote the degradation of host IKBKB, leading to NF-kappa-B down-regulation and subsequent apoptosis. Acts as a viroporin that forms an oligomeric ion channel in membranes. Modulates the host DNA repair mechanisms to promote degradation of nuclear viral cDNA in cells that are already productively infected in order to suppress immune sensing and proviral hyper-integration (superinfection). Manipulates PML-NBs and modulates SUMOylation of host BLM protein thereby enhancing its DNA-end processing activity toward viral unintegrated linear DNA. Also inhibits RAD52-mediated homologous repair of viral cDNA, preventing the generation of dead-end circular forms of single copies of the long terminal repeat and permitting sustained nucleolytic attack. The chain is Protein Vpu from Human immunodeficiency virus type 1 group O (isolate MVP5180) (HIV-1).